A 288-amino-acid polypeptide reads, in one-letter code: Cell division protein ZipA (288 aa).

Met-1 is a topological domain (periplasmic). Residues 2 to 22 (EIGLREWLIVIGIIVIAGILF) form a helical membrane-spanning segment. Residues 23–288 (DGWRRMRGGK…FERRALTQKR (266 aa)) lie on the Cytoplasmic side of the membrane. 2 stretches are compositionally biased toward basic and acidic residues: residues 66–75 (KEPQLDEHDL) and 83–93 (REAREPRESGS). A disordered region spans residues 66-141 (KEPQLDEHDL…AKSSPAVADK (76 aa)). Residues 106–117 (GDLNLDLDLDGG) show a composition bias toward low complexity.

Belongs to the ZipA family. Interacts with FtsZ via their C-terminal domains.

It localises to the cell inner membrane. Essential cell division protein that stabilizes the FtsZ protofilaments by cross-linking them and that serves as a cytoplasmic membrane anchor for the Z ring. Also required for the recruitment to the septal ring of downstream cell division proteins. The protein is Cell division protein ZipA of Pseudomonas fluorescens (strain Pf0-1).